The chain runs to 477 residues: Aspartyl/glutamyl-tRNA(Asn/Gln) amidotransferase subunit B (477 aa).

It belongs to the GatB/GatE family. GatB subfamily. As to quaternary structure, heterotrimer of A, B and C subunits.

It carries out the reaction L-glutamyl-tRNA(Gln) + L-glutamine + ATP + H2O = L-glutaminyl-tRNA(Gln) + L-glutamate + ADP + phosphate + H(+). It catalyses the reaction L-aspartyl-tRNA(Asn) + L-glutamine + ATP + H2O = L-asparaginyl-tRNA(Asn) + L-glutamate + ADP + phosphate + 2 H(+). In terms of biological role, allows the formation of correctly charged Asn-tRNA(Asn) or Gln-tRNA(Gln) through the transamidation of misacylated Asp-tRNA(Asn) or Glu-tRNA(Gln) in organisms which lack either or both of asparaginyl-tRNA or glutaminyl-tRNA synthetases. The reaction takes place in the presence of glutamine and ATP through an activated phospho-Asp-tRNA(Asn) or phospho-Glu-tRNA(Gln). This is Aspartyl/glutamyl-tRNA(Asn/Gln) amidotransferase subunit B from Lactococcus lactis subsp. cremoris (strain MG1363).